We begin with the raw amino-acid sequence, 510 residues long: Cytochrome P450 703A2 (510 aa).

A helical transmembrane segment spans residues 2–22; sequence ILVLASLFAVLILNVLLWRWL. Cys-451 is a binding site for heme.

Belongs to the cytochrome P450 family. Requires heme as cofactor.

The protein localises to the membrane. The enzyme catalyses dodecanoate + reduced [NADPH--hemoprotein reductase] + O2 = 7-hydroxydodecanoate + oxidized [NADPH--hemoprotein reductase] + H2O + H(+). In terms of biological role, involved in pollen wall development. Catalyzes the conversion of medium-chain saturated fatty acids to the corresponding monohydroxylated fatty acids, with a preferential hydroxylation of lauric acid at the C-7 position. In-chain hydroxylated fatty acids, together with omega-hydroxylated fatty acids, are key monomeric aliphatic building blocks for sporopollenin synthesis during exine formation. This is Cytochrome P450 703A2 from Arabidopsis thaliana (Mouse-ear cress).